We begin with the raw amino-acid sequence, 216 residues long: Uracil phosphoribosyltransferase (216 aa).

Residue 30 to 34 (KNLVR) participates in GTP binding. Residues Arg80, Arg105, and 140–148 (DPMIATAST) contribute to the 5-phospho-alpha-D-ribose 1-diphosphate site. Uracil contacts are provided by residues Ile203 and 208 to 210 (GDA). Asp209 is a binding site for 5-phospho-alpha-D-ribose 1-diphosphate.

It belongs to the UPRTase family. Mg(2+) is required as a cofactor.

The catalysed reaction is UMP + diphosphate = 5-phospho-alpha-D-ribose 1-diphosphate + uracil. It participates in pyrimidine metabolism; UMP biosynthesis via salvage pathway; UMP from uracil: step 1/1. Its activity is regulated as follows. Allosterically activated by GTP. Catalyzes the conversion of uracil and 5-phospho-alpha-D-ribose 1-diphosphate (PRPP) to UMP and diphosphate. The chain is Uracil phosphoribosyltransferase from Saccharolobus islandicus (strain Y.N.15.51 / Yellowstone #2) (Sulfolobus islandicus).